The sequence spans 311 residues: MTDFSASPDLQDPTTHAGFVAIVGKPNVGKSTLLNAFLGTKVAPTSPRPQTTRRGVRGIYTLDNRQLIFVDTPGLHKPKDALGKYMNSEVHSALSDVDAVVWVVDLRHPPTDEDRLVANSVRDLPKPLFLVGNKTDAAKYPEEAMKLYGALLEGRGSDLPVSETMLSAQNSVNAVATLREQLLEVLPENPFFFPQGAASDQSREMWAAEIIREEAMKKLRDELPYAVATRVNRWTEREDGLQRIEGEIIVEKNAHKGMVIGAGGKQLREIGQAARKQLEVFLNHKVYLGLEVIVIPGWREDEEALRELGYE.

Residues 16–188 (HAGFVAIVGK…REQLLEVLPE (173 aa)) enclose the Era-type G domain. Positions 24–31 (GKPNVGKS) are G1. Residue 24-31 (GKPNVGKS) participates in GTP binding. A G2 region spans residues 50–54 (QTTRR). The interval 71 to 74 (DTPG) is G3. GTP is bound by residues 71 to 75 (DTPGL) and 133 to 136 (NKTD). Positions 133-136 (NKTD) are G4. The tract at residues 166 to 168 (LSA) is G5. The KH type-2 domain occupies 219–296 (LRDELPYAVA…YLGLEVIVIP (78 aa)).

Belongs to the TRAFAC class TrmE-Era-EngA-EngB-Septin-like GTPase superfamily. Era GTPase family. Monomer.

It is found in the cytoplasm. The protein resides in the cell membrane. Its function is as follows. An essential GTPase that binds both GDP and GTP, with rapid nucleotide exchange. Plays a role in 16S rRNA processing and 30S ribosomal subunit biogenesis and possibly also in cell cycle regulation and energy metabolism. The polypeptide is GTPase Era (Deinococcus radiodurans (strain ATCC 13939 / DSM 20539 / JCM 16871 / CCUG 27074 / LMG 4051 / NBRC 15346 / NCIMB 9279 / VKM B-1422 / R1)).